A 426-amino-acid chain; its full sequence is Enolase (426 aa).

Q163 is a binding site for (2R)-2-phosphoglycerate. E205 acts as the Proton donor in catalysis. The Mg(2+) site is built by D242, E283, and D310. Residues K335, R364, S365, and K386 each contribute to the (2R)-2-phosphoglycerate site. Residue K335 is the Proton acceptor of the active site.

This sequence belongs to the enolase family. Mg(2+) is required as a cofactor.

The protein resides in the cytoplasm. The protein localises to the secreted. It localises to the cell surface. It catalyses the reaction (2R)-2-phosphoglycerate = phosphoenolpyruvate + H2O. Its pathway is carbohydrate degradation; glycolysis; pyruvate from D-glyceraldehyde 3-phosphate: step 4/5. Its function is as follows. Catalyzes the reversible conversion of 2-phosphoglycerate (2-PG) into phosphoenolpyruvate (PEP). It is essential for the degradation of carbohydrates via glycolysis. This is Enolase from Leifsonia xyli subsp. xyli (strain CTCB07).